A 31-amino-acid chain; its full sequence is MLTVIAYLGLLASVLIGTIVIYLGLVKVKLI.

Residues 4–24 form a helical membrane-spanning segment; it reads VIAYLGLLASVLIGTIVIYLG.

This sequence belongs to the PetL family. The 4 large subunits of the cytochrome b6-f complex are cytochrome b6, subunit IV (17 kDa polypeptide, PetD), cytochrome f and the Rieske protein, while the 4 small subunits are PetG, PetL, PetM and PetN. The complex functions as a dimer.

It is found in the plastid. It localises to the chloroplast thylakoid membrane. Functionally, component of the cytochrome b6-f complex, which mediates electron transfer between photosystem II (PSII) and photosystem I (PSI), cyclic electron flow around PSI, and state transitions. PetL is important for photoautotrophic growth as well as for electron transfer efficiency and stability of the cytochrome b6-f complex. The sequence is that of Cytochrome b6-f complex subunit 6 from Oltmannsiellopsis viridis (Marine flagellate).